Here is a 263-residue protein sequence, read N- to C-terminus: Tryptophan synthase alpha chain (263 aa).

Residues E47 and D58 each act as proton acceptor in the active site.

This sequence belongs to the TrpA family. Tetramer of two alpha and two beta chains.

Its subcellular location is the plastid. The protein localises to the chloroplast. The catalysed reaction is (1S,2R)-1-C-(indol-3-yl)glycerol 3-phosphate + L-serine = D-glyceraldehyde 3-phosphate + L-tryptophan + H2O. The protein operates within amino-acid biosynthesis; L-tryptophan biosynthesis; L-tryptophan from chorismate: step 5/5. In terms of biological role, the alpha subunit is responsible for the aldol cleavage of indoleglycerol phosphate to indole and glyceraldehyde 3-phosphate. This Pyropia yezoensis (Susabi-nori) protein is Tryptophan synthase alpha chain.